The chain runs to 545 residues: Chaperonin GroEL (545 aa).

Residues 29–32, Lys-50, 86–90, Gly-415, and Asp-495 contribute to the ATP site; these read TLGP and DGTTT.

It belongs to the chaperonin (HSP60) family. In terms of assembly, forms a cylinder of 14 subunits composed of two heptameric rings stacked back-to-back. Interacts with the co-chaperonin GroES.

The protein localises to the cytoplasm. It catalyses the reaction ATP + H2O + a folded polypeptide = ADP + phosphate + an unfolded polypeptide.. Functionally, together with its co-chaperonin GroES, plays an essential role in assisting protein folding. The GroEL-GroES system forms a nano-cage that allows encapsulation of the non-native substrate proteins and provides a physical environment optimized to promote and accelerate protein folding. In Phocaeicola vulgatus (strain ATCC 8482 / DSM 1447 / JCM 5826 / CCUG 4940 / NBRC 14291 / NCTC 11154) (Bacteroides vulgatus), this protein is Chaperonin GroEL.